Here is a 692-residue protein sequence, read N- to C-terminus: Peroxisomal primary amine oxidase (692 aa).

The span at 1–22 shows a compositional bias: low complexity; it reads MERLRQIASQATAASAAPARPA. The tract at residues 1 to 26 is disordered; that stretch reads MERLRQIASQATAASAAPARPAHPLD. A glycan (N-linked (GlcNAc...) asparagine) is linked at Asn243. Substrate is bound at residue 317 to 328; sequence ALDIGEYGAGYM. Residue Asp319 is the Proton acceptor of the active site. Cys338 and Cys364 are joined by a disulfide. 402-407 provides a ligand contact to substrate; it reads AANYEY. Tyr405 acts as the Schiff-base intermediate with substrate; via topaquinone in catalysis. Position 405 is a 2',4',5'-topaquinone (Tyr405). His456 and His458 together coordinate Cu cation. Residues Asp465, Asp613, and Ile614 each coordinate Mn(2+). Residue His624 participates in Cu cation binding.

The protein belongs to the copper/topaquinone oxidase family. As to quaternary structure, homodimer. It depends on Cu cation as a cofactor. Zn(2+) serves as cofactor. L-topaquinone is required as a cofactor. The cofactor is Mn(2+). In terms of processing, topaquinone (TPQ) is generated by copper-dependent autoxidation of a specific tyrosyl residue.

The protein localises to the peroxisome. The catalysed reaction is a primary methyl amine + O2 + H2O = an aldehyde + H2O2 + NH4(+). The polypeptide is Peroxisomal primary amine oxidase (AMO) (Pichia angusta (Yeast)).